The chain runs to 344 residues: N,N-dimethyltransferase OxyT (344 aa).

Residues aspartate 205 and 231–233 contribute to the S-adenosyl-L-methionine site; that span reads GDF.

It belongs to the class I-like SAM-binding methyltransferase superfamily. Cation-independent O-methyltransferase family.

It carries out the reaction 4-amino-4-dedimethylamino-anhydrotetracycline + S-adenosyl-L-methionine = 4-methylamino-4-dedimethylamino-anhydrotetracycline + S-adenosyl-L-homocysteine + H(+). The catalysed reaction is 4-methylamino-4-dedimethylamino-anhydrotetracycline + S-adenosyl-L-methionine = anhydrotetracycline + S-adenosyl-L-homocysteine + H(+). It functions in the pathway antibiotic biosynthesis; oxytetracycline biosynthesis. Functionally, involved in the biosynthesis of the tetracycline antibiotic, oxytetracycline. Catalyzes the dimethylation of 4-amino-4-de(dimethylamino)anhydrotetracycline (4-amino-ATC) to yield anhydrotetracycline (ATC). Also able to catalyze the dimethylation of 7-chloro-, 6-demethyl-, 2-decarboxamido-2-nitrile-, and 4-methylamino-derivatives of 4-amino-4-de(dimethylamino)anhydrotetracycline. The chain is N,N-dimethyltransferase OxyT from Streptomyces rimosus.